A 374-amino-acid chain; its full sequence is Beta sliding clamp (374 aa).

It belongs to the beta sliding clamp family. As to quaternary structure, forms a ring-shaped head-to-tail homodimer around DNA which binds and tethers DNA polymerases and other proteins to the DNA. The DNA replisome complex has a single clamp-loading complex (3 tau and 1 each of delta, delta', psi and chi subunits) which binds 3 Pol III cores (1 core on the leading strand and 2 on the lagging strand) each with a beta sliding clamp dimer. Additional proteins in the replisome are other copies of gamma, psi and chi, Ssb, DNA helicase and RNA primase.

It is found in the cytoplasm. Confers DNA tethering and processivity to DNA polymerases and other proteins. Acts as a clamp, forming a ring around DNA (a reaction catalyzed by the clamp-loading complex) which diffuses in an ATP-independent manner freely and bidirectionally along dsDNA. Initially characterized for its ability to contact the catalytic subunit of DNA polymerase III (Pol III), a complex, multichain enzyme responsible for most of the replicative synthesis in bacteria; Pol III exhibits 3'-5' exonuclease proofreading activity. The beta chain is required for initiation of replication as well as for processivity of DNA replication. The polypeptide is Beta sliding clamp (dnaN) (Helicobacter pylori (strain J99 / ATCC 700824) (Campylobacter pylori J99)).